The following is a 308-amino-acid chain: UDP-N-acetylenolpyruvoylglucosamine reductase (308 aa).

Residues 32–196 form the FAD-binding PCMH-type domain; that stretch reads VGGPAARLYK…ISAKLQLSPG (165 aa). Residue Arg176 is part of the active site. Ser225 acts as the Proton donor in catalysis. Glu296 is an active-site residue.

It belongs to the MurB family. FAD serves as cofactor.

Its subcellular location is the cytoplasm. It catalyses the reaction UDP-N-acetyl-alpha-D-muramate + NADP(+) = UDP-N-acetyl-3-O-(1-carboxyvinyl)-alpha-D-glucosamine + NADPH + H(+). Its pathway is cell wall biogenesis; peptidoglycan biosynthesis. In terms of biological role, cell wall formation. This Legionella pneumophila (strain Corby) protein is UDP-N-acetylenolpyruvoylglucosamine reductase.